Consider the following 985-residue polypeptide: MDRLNNVGGETERELDEKYPNRPRNKHSTLPFHDLFLTLFNPLNGNKKRPTGPAAARKKLGPHGGQQTLSPQELRRDIIQRFISRWRKEVGNDIYPAFRLIIPEKDRDRAMYGLKEKTIGKLLVKIMKIDKNSEDGFNLLNWKLPGQSMASRMAGDFAGRCYEVISKRPIRTDVGNMTIQEVNDKLDVLAATSKEDEQIPVLEEFYRNMNPEELMWLIRIILRQMKVGATERTFFEIWHPDAESLFSISSSLRRVCWELYDPNVRLEADEARVTLMQCFQPQLAQFQMHSFPKMIERMRLSPDDPTFWIEEKLDGERIQLHMMSDDSIPGGKRFGFWSRKAKDYTYLYGNGFYDENGALTRHLKDAFADGVDNIILDGEMITWDPEQDAPLPFGTLKTAALSEQRNPFSATGQRPLFRIFDILYLNDKALTRYTLRDRRRALEASIKPVHRRLEVHTYEIGNSAADIEPQLRKVVAEASEGLVLKNPNSPYRLNDRHDDWMKVKPEYMTEFGESLDCVVIGGYYGSGKRGGGLASFLCGLRVDEAQVRQGASPMKCYSFLKVGGGFTAPDYANIRHHTDGKWKDWNPKKPPTEFIELAGGDAQYERPDVWIRPDESVVLCVKAASVTPSDQFRLGLTVRFPRFKRLRMDKDWKSALSIQEFMDLKANAEREQKEKEFKIDNSRRKRAKRAVKKPLTIAGYDESKRAGFTGPSGHVFEGMNFFVITDSVEPEKKSKLELEQLIKANGGKIYQTHTAAPNTLCIAERRTVKVASVQKVAKESIIRPSWLFDCIKQNEVDKGLPDLLIPFEPRHMYFTVKSQEEEIARHVDEYSDSYARDITPNELSKLLVSMPLIPNLPPPHISKTETQIQERESTFQELRGWLFKNQVLHFVKRRSDSMLSLPLRLASNLARFAGASVANELEDKSITHVVIDTDSQPADVSALRSAISKRVAAGRRIPHLVTIAWIQDSWKAESLLDEERFAPTA.

Disordered regions lie at residues 1 to 27 (MDRL…RNKH) and 43 to 70 (LNGN…QTLS). Over residues 10–20 (ETERELDEKYP) the composition is skewed to basic and acidic residues. A compositionally biased stretch (basic residues) spans 46 to 61 (NKKRPTGPAAARKKLG). The ATP site is built by E310, K312, L313, R317, E379, F420, E480, K485, K502, and K504. The active-site N6-AMP-lysine intermediate is the K312. Mg(2+) is bound at residue E379. E480 contributes to the Mg(2+) binding site. BRCT domains lie at 711–804 (PSGH…PDLL) and 878–983 (LRGW…RFAP).

This sequence belongs to the ATP-dependent DNA ligase family. It depends on Mg(2+) as a cofactor.

It localises to the nucleus. It catalyses the reaction ATP + (deoxyribonucleotide)n-3'-hydroxyl + 5'-phospho-(deoxyribonucleotide)m = (deoxyribonucleotide)n+m + AMP + diphosphate.. DNA ligase involved in DNA non-homologous end joining (NHEJ); required for double-strand break (DSB) repair. The protein is DNA ligase 4 (LIG4) of Coccidioides immitis (strain RS) (Valley fever fungus).